A 152-amino-acid polypeptide reads, in one-letter code: Heavy metal-associated isoprenylated plant protein 20 (152 aa).

In terms of domain architecture, HMA spans 27–90 (MQTVNIKVKM…RIERTGKKAE (64 aa)). 2 residues coordinate Cd(2+): cysteine 38 and cysteine 41. Cysteine 149 carries the post-translational modification Cysteine methyl ester. Residue cysteine 149 is the site of S-farnesyl cysteine attachment. The propeptide at 150–152 (TVM) is removed in mature form.

This sequence belongs to the HIPP family. Interacts with ZHD11/HB29. Expressed in roots, shoot apical meristem, leaves and flowers.

Its subcellular location is the membrane. Its function is as follows. Heavy-metal-binding protein. Binds cadmium. May be involved in cadmium transport and play a role in cadmium detoxification. The chain is Heavy metal-associated isoprenylated plant protein 20 from Arabidopsis thaliana (Mouse-ear cress).